Reading from the N-terminus, the 520-residue chain is Leucine carboxyl methyltransferase 1 (520 aa).

Disordered stretches follow at residues 1–116 (MQRD…DDAV) and 142–174 (TQEF…SIRR). Low complexity predominate over residues 79–89 (PSLRLSLGLPR). Polar residues-rich tracts occupy residues 95–110 (HSGQ…STAR) and 142–151 (TQEFSSTLPS). Residues R185, G210, D237, 305–306 (DV), and E343 each bind S-adenosyl-L-methionine.

It belongs to the methyltransferase superfamily. LCMT family.

It carries out the reaction [phosphatase 2A protein]-C-terminal L-leucine + S-adenosyl-L-methionine = [phosphatase 2A protein]-C-terminal L-leucine methyl ester + S-adenosyl-L-homocysteine. Functionally, methylates the carboxyl group of the C-terminal leucine residue of protein phosphatase 2A catalytic subunits to form alpha-leucine ester residues. This Mycosarcoma maydis (Corn smut fungus) protein is Leucine carboxyl methyltransferase 1 (PPM1).